The primary structure comprises 408 residues: DNA replication and repair protein RecF (408 aa).

30–37 contributes to the ATP binding site; the sequence is GSNGQGKT. 2 disordered regions span residues 220–252 and 389–408; these read DHGPSARPELSILADDPGEDDVADETGARDGGR and SPTPASASEPASPGEDGGAA. The span at 389 to 402 shows a compositional bias: low complexity; it reads SPTPASASEPASPG.

It belongs to the RecF family.

Its subcellular location is the cytoplasm. Functionally, the RecF protein is involved in DNA metabolism; it is required for DNA replication and normal SOS inducibility. RecF binds preferentially to single-stranded, linear DNA. It also seems to bind ATP. The protein is DNA replication and repair protein RecF of Clavibacter sepedonicus (Clavibacter michiganensis subsp. sepedonicus).